The chain runs to 213 residues: Kynurenine formamidase (213 aa).

Tryptophan 18 lines the substrate pocket. Histidine 48, histidine 52, and aspartate 54 together coordinate Zn(2+). Residue histidine 58 is the Proton donor/acceptor of the active site. 2 residues coordinate Zn(2+): histidine 160 and glutamate 172.

It belongs to the Cyclase 1 superfamily. KynB family. Homodimer. Requires Zn(2+) as cofactor.

The enzyme catalyses N-formyl-L-kynurenine + H2O = L-kynurenine + formate + H(+). Its pathway is amino-acid degradation; L-tryptophan degradation via kynurenine pathway; L-kynurenine from L-tryptophan: step 2/2. Catalyzes the hydrolysis of N-formyl-L-kynurenine to L-kynurenine, the second step in the kynurenine pathway of tryptophan degradation. The chain is Kynurenine formamidase from Burkholderia orbicola (strain MC0-3).